A 949-amino-acid polypeptide reads, in one-letter code: ATPase 5, plasma membrane-type (949 aa).

Ser2 carries the N-acetylserine modification. Residues 2 to 61 (SELDHIKNESVDLVRIPMEEVFEELKCTKQGLTANEASHRLDVFGPNKLEEKKESKLLKF) lie on the Cytoplasmic side of the membrane. Residues 62–81 (LGFMWNPLSWVMEVAALMAI) traverse the membrane as a helical segment. The Extracellular portion of the chain corresponds to 82-93 (ALANGGGRPPDW). A helical membrane pass occupies residues 94 to 114 (QDFVGIVCLLLINSTISFIEE). Residues 115–243 (NNAGNAAAAL…GHFQKVLTSI (129 aa)) lie on the Cytoplasmic side of the membrane. A helical membrane pass occupies residues 244–264 (GNFCICSIALGIIVELLVMYP). The Extracellular portion of the chain corresponds to 265–273 (IQRRRYRDG). A helical membrane pass occupies residues 274-291 (IDNLLVLLIGGIPIAMPS). The Cytoplasmic portion of the chain corresponds to 292-643 (VLSVTMATGS…TSRAIFQRMK (352 aa)). Catalysis depends on Asp329, which acts as the 4-aspartylphosphate intermediate. Positions 588 and 592 each coordinate Mg(2+). Residues 644 to 665 (NYTIYAVSITIRIVFGFMFIAL) traverse the membrane as a helical segment. Over 666-670 (IWQFD) the chain is Extracellular. The helical transmembrane segment at 671–693 (FSPFMVLIIAILNDGTIMTISKD) threads the bilayer. Residues 694–709 (RMKPSPQPDSWKLRDI) are Cytoplasmic-facing. Residues 710–730 (FSTGVVLGGYQALMTVVFFWV) traverse the membrane as a helical segment. Residues 731–751 (MKDSDFFSNYFGVRPLSQRPE) lie on the Extracellular side of the membrane. The helical transmembrane segment at 752–772 (QMMAALYLQVSIISQALIFVT) threads the bilayer. The Cytoplasmic segment spans residues 773–784 (RSRSWSYAECPG). The helical transmembrane segment at 785–805 (LLLLGAFVIAQLVATFIAVYA) threads the bilayer. At 806 to 813 (NWSFARIE) the chain is on the extracellular side. Residues 814-834 (GAGWGWAGVIWLYSFLTYIPL) form a helical membrane-spanning segment. Topologically, residues 835-949 (DLLKFGIRYV…IDTIQQHYTV (115 aa)) are cytoplasmic. Thr881 is subject to Phosphothreonine. 2 positions are modified to phosphoserine: Ser899 and Ser931. The tract at residues 947-949 (YTV) is interaction with 14-3-3 proteins. Thr948 is subject to Phosphothreonine.

The protein belongs to the cation transport ATPase (P-type) (TC 3.A.3) family. Type IIIA subfamily. In terms of assembly, binds to 14-3-3 proteins. The binding is induced by phosphorylation of Thr-948. Binding to 14-3-3 proteins activates the H(+)-ATPase. As to expression, expressed in guard cells and leaves.

It is found in the membrane. It carries out the reaction ATP + H2O + H(+)(in) = ADP + phosphate + 2 H(+)(out). In terms of biological role, the plasma membrane H(+) ATPase of plants and fungi generates a proton gradient that drives the active transport of nutrients by H(+)-symport. The resulting external acidification and/or internal alkinization may mediate growth responses. This is ATPase 5, plasma membrane-type (AHA5) from Arabidopsis thaliana (Mouse-ear cress).